Consider the following 395-residue polypeptide: 1-deoxy-D-xylulose 5-phosphate reductoisomerase (395 aa).

NADPH is bound by residues T15, G16, S17, I18, G41, N43, and N126. K127 is a 1-deoxy-D-xylulose 5-phosphate binding site. E128 is a binding site for NADPH. D152 contacts Mn(2+). S153, E154, S178, and H201 together coordinate 1-deoxy-D-xylulose 5-phosphate. Residue E154 participates in Mn(2+) binding. G207 contacts NADPH. Residues S214, N219, K220, and E223 each contribute to the 1-deoxy-D-xylulose 5-phosphate site. E223 provides a ligand contact to Mn(2+).

The protein belongs to the DXR family. Requires Mg(2+) as cofactor. Mn(2+) is required as a cofactor.

The catalysed reaction is 2-C-methyl-D-erythritol 4-phosphate + NADP(+) = 1-deoxy-D-xylulose 5-phosphate + NADPH + H(+). The protein operates within isoprenoid biosynthesis; isopentenyl diphosphate biosynthesis via DXP pathway; isopentenyl diphosphate from 1-deoxy-D-xylulose 5-phosphate: step 1/6. In terms of biological role, catalyzes the NADPH-dependent rearrangement and reduction of 1-deoxy-D-xylulose-5-phosphate (DXP) to 2-C-methyl-D-erythritol 4-phosphate (MEP). This Ruegeria sp. (strain TM1040) (Silicibacter sp.) protein is 1-deoxy-D-xylulose 5-phosphate reductoisomerase.